We begin with the raw amino-acid sequence, 97 residues long: UPF0235 protein APP7_1431 (97 aa).

It belongs to the UPF0235 family.

The polypeptide is UPF0235 protein APP7_1431 (Actinobacillus pleuropneumoniae serotype 7 (strain AP76)).